The primary structure comprises 450 residues: Glutamyl-tRNA(Gln) amidotransferase subunit A, mitochondrial (450 aa).

Residues K47 and S122 each act as charge relay system in the active site. The active-site Acyl-ester intermediate is S146.

The protein belongs to the amidase family. GatA subfamily. Subunit of the heterotrimeric GatFAB amidotransferase (AdT) complex, composed of A, B and F subunits.

It localises to the mitochondrion. It catalyses the reaction L-glutamyl-tRNA(Gln) + L-glutamine + ATP + H2O = L-glutaminyl-tRNA(Gln) + L-glutamate + ADP + phosphate + H(+). In terms of biological role, allows the formation of correctly charged Gln-tRNA(Gln) through the transamidation of misacylated Glu-tRNA(Gln) in the mitochondria. The reaction takes place in the presence of glutamine and ATP through an activated gamma-phospho-Glu-tRNA(Gln). The protein is Glutamyl-tRNA(Gln) amidotransferase subunit A, mitochondrial of Candida albicans (strain WO-1) (Yeast).